The chain runs to 95 residues: Co-chaperonin GroES (95 aa).

Belongs to the GroES chaperonin family. In terms of assembly, heptamer of 7 subunits arranged in a ring. Interacts with the chaperonin GroEL.

It localises to the cytoplasm. Together with the chaperonin GroEL, plays an essential role in assisting protein folding. The GroEL-GroES system forms a nano-cage that allows encapsulation of the non-native substrate proteins and provides a physical environment optimized to promote and accelerate protein folding. GroES binds to the apical surface of the GroEL ring, thereby capping the opening of the GroEL channel. The sequence is that of Co-chaperonin GroES from Nitratidesulfovibrio vulgaris (strain DSM 19637 / Miyazaki F) (Desulfovibrio vulgaris).